The chain runs to 309 residues: Succinate dehydrogenase [ubiquinone] iron-sulfur subunit 3, mitochondrial (309 aa).

The N-terminal 22 residues, 1-22 (MSSVLRLLGRRICNPAAEKVRL), are a transit peptide targeting the mitochondrion. Residues 69-160 (FKIYRWNPDK…PTIITPLPHM (92 aa)) form the 2Fe-2S ferredoxin-type domain. [2Fe-2S] cluster contacts are provided by Cys-120, Cys-125, and Cys-140. The 4Fe-4S ferredoxin-type domain occupies 202 to 232 (DRKKLDGLYECILCACCTTSCPSYWWNPEEF). Residues Cys-212, Cys-215, and Cys-218 each coordinate [4Fe-4S] cluster. Position 222 (Cys-222) interacts with [3Fe-4S] cluster. A ubiquinone is bound at residue Trp-227. [3Fe-4S] cluster-binding residues include Cys-270 and Cys-276. Cys-280 is a [4Fe-4S] cluster binding site.

It belongs to the succinate dehydrogenase/fumarate reductase iron-sulfur protein family. In terms of assembly, component of complex II composed of eight subunits in plants: four classical SDH subunits SDH1, SDH2, SDH3 and SDH4 (a flavoprotein (FP), an iron-sulfur protein (IP), and a cytochrome b composed of a large and a small subunit.), as well as four subunits unknown in mitochondria from bacteria and heterotrophic eukaryotes. Requires [2Fe-2S] cluster as cofactor. It depends on [3Fe-4S] cluster as a cofactor. [4Fe-4S] cluster serves as cofactor.

It localises to the mitochondrion inner membrane. The enzyme catalyses a quinone + succinate = fumarate + a quinol. The protein operates within carbohydrate metabolism; tricarboxylic acid cycle; fumarate from succinate (eukaryal route): step 1/1. Its function is as follows. Iron-sulfur protein (IP) subunit of succinate dehydrogenase (SDH) that is involved in complex II of the mitochondrial electron transport chain and is responsible for transferring electrons from succinate to ubiquinone (coenzyme Q). This is Succinate dehydrogenase [ubiquinone] iron-sulfur subunit 3, mitochondrial (SDH2-3) from Arabidopsis thaliana (Mouse-ear cress).